Reading from the N-terminus, the 396-residue chain is Alanine racemase (396 aa).

Lys46 acts as the Proton acceptor; specific for D-alanine in catalysis. Lys46 is modified (N6-(pyridoxal phosphate)lysine). Arg145 lines the substrate pocket. Tyr280 functions as the Proton acceptor; specific for L-alanine in the catalytic mechanism. Met328 is a substrate binding site.

This sequence belongs to the alanine racemase family. Requires pyridoxal 5'-phosphate as cofactor.

It carries out the reaction L-alanine = D-alanine. It participates in amino-acid biosynthesis; D-alanine biosynthesis; D-alanine from L-alanine: step 1/1. Functionally, catalyzes the interconversion of L-alanine and D-alanine. May also act on other amino acids. The polypeptide is Alanine racemase (alr) (Brucella canis (strain ATCC 23365 / NCTC 10854 / RM-666)).